Here is a 248-residue protein sequence, read N- to C-terminus: Large ribosomal subunit protein uL4 (248 aa).

Disordered stretches follow at residues Gly-48–Pro-95 and Ala-210–Ala-248. A compositionally biased stretch (basic and acidic residues) spans Asp-233–Ala-248.

It belongs to the universal ribosomal protein uL4 family. As to quaternary structure, part of the 50S ribosomal subunit.

Functionally, one of the primary rRNA binding proteins, this protein initially binds near the 5'-end of the 23S rRNA. It is important during the early stages of 50S assembly. It makes multiple contacts with different domains of the 23S rRNA in the assembled 50S subunit and ribosome. Its function is as follows. Forms part of the polypeptide exit tunnel. The sequence is that of Large ribosomal subunit protein uL4 from Tropheryma whipplei (strain TW08/27) (Whipple's bacillus).